We begin with the raw amino-acid sequence, 598 residues long: uncharacterized protein (598 aa).

4 residues coordinate Mn(2+): D397, D408, E506, and E520.

The protein belongs to the peptidase M24B family. It depends on Mn(2+) as a cofactor.

This is an uncharacterized protein from Schizosaccharomyces pombe (strain 972 / ATCC 24843) (Fission yeast).